Here is a 733-residue protein sequence, read N- to C-terminus: E3 ubiquitin-protein ligase COP1 (733 aa).

Positions 1-43 are disordered; it reads MSGSRQAGSGSAGTSPGSSAASSVTSASSSLSSSPSPPSVAAS. The short motif at 111–115 is the Nuclear localization signal 1 element; the sequence is SSRKR. The segment at 138 to 176 adopts an RING-type zinc-finger fold; that stretch reads CPICFDMIEEAYMTKCGHSFCYKCIHQSLEDNNRCPKCN. The Nuclear localization signal 2 motif lies at 197 to 208; the sequence is KQKQRFEEKRFK. Positions 231–306 form a coiled coil; the sequence is DQDNLDLANV…RVEEMSGLYS (76 aa). The Nuclear export signal motif lies at 237-247; sequence LANVNLMLELL. The tract at residues 307 to 327 is disordered; sequence PVSEDSTVPQFEAPSPSHSSI. WD repeat units follow at residues 421–460, 470–510, 513–553, 555–595, 599–637, 640–679, and 695–731; these read NGSS…QDAV, TCNS…RSKV, EHEK…SVAS, EAKA…QPIM, GHRK…CLRS, GHIN…TLLT, and EDDT…KVLE. Residues 645–647 form an interaction with TRIB1 region; it reads KNF.

It belongs to the COP1 family. Homodimer. Homodimerization is mediated by the coiled coil domain. Component of the DCX DET1-COP1 ubiquitin ligase complex at least composed of RBX1, DET1, DDB1, CUL4A and COP1. Isoform 2 does not interact with CUL4A but still binds to RBX1, suggesting that the interaction may be mediated by another cullin protein. Isoform 1 and isoform 2 interact with CUL5 but not with CUL1, CUL2 not CUL3. Interacts with bZIP transcription factors JUN, JUNB and JUND but not with FOS, ATF2 nor XBP1. Interacts with p53 (TP53). Interacts with COPS6; this interaction stabilizes RFWD2 through reducing its auto-ubiquitination and decelerating its turnover rate. Interacts with SFN; this interaction leads to SFN degradation. Interacts with p53/TP53 and MTA1. Interacts with TRIB1 (via C-terminus) and TRIB2.

The protein localises to the nucleus speckle. It localises to the cytoplasm. It carries out the reaction S-ubiquitinyl-[E2 ubiquitin-conjugating enzyme]-L-cysteine + [acceptor protein]-L-lysine = [E2 ubiquitin-conjugating enzyme]-L-cysteine + N(6)-ubiquitinyl-[acceptor protein]-L-lysine.. Its pathway is protein modification; protein ubiquitination. Its activity is regulated as follows. TRIB1 competes with substrates for RFWD2 binding. E3 ubiquitin-protein ligase that mediates ubiquitination and subsequent proteasomal degradation of target proteins. E3 ubiquitin ligases accept ubiquitin from an E2 ubiquitin-conjugating enzyme in the form of a thioester and then directly transfers the ubiquitin to targeted substrates. Involved in JUN ubiquitination and degradation. Directly involved in p53 (TP53) ubiquitination and degradation, thereby abolishing p53-dependent transcription and apoptosis. Ubiquitinates p53 independently of MDM2 or RCHY1. Probably mediates E3 ubiquitin ligase activity by functioning as the essential RING domain subunit of larger E3 complexes. In contrast, it does not constitute the catalytic RING subunit in the DCX DET1-COP1 complex that negatively regulates JUN, the ubiquitin ligase activity being mediated by RBX1. Involved in 14-3-3 protein sigma/SFN ubiquitination and proteasomal degradation, leading to AKT activation and promotion of cell survival. Ubiquitinates MTA1 leading to its proteasomal degradation. Upon binding to TRIB1, ubiquitinates CEBPA, which lacks a canonical COP1-binding motif. In Mus musculus (Mouse), this protein is E3 ubiquitin-protein ligase COP1.